Here is a 468-residue protein sequence, read N- to C-terminus: Cysteine--tRNA ligase (468 aa).

Position 33 (C33) interacts with Zn(2+). The 'HIGH' region motif lies at 35-45; sequence ATVQGLPHIGH. 3 residues coordinate Zn(2+): C211, H236, and E240. The short motif at 267 to 271 is the 'KMSKS' region element; it reads KMSKS. K270 is an ATP binding site.

It belongs to the class-I aminoacyl-tRNA synthetase family. In terms of assembly, monomer. Zn(2+) is required as a cofactor.

It is found in the cytoplasm. It catalyses the reaction tRNA(Cys) + L-cysteine + ATP = L-cysteinyl-tRNA(Cys) + AMP + diphosphate. The chain is Cysteine--tRNA ligase from Mycolicibacterium paratuberculosis (strain ATCC BAA-968 / K-10) (Mycobacterium paratuberculosis).